Here is a 356-residue protein sequence, read N- to C-terminus: 5-formaminoimidazole-4-carboxamide-1-(beta)-D-ribofuranosyl 5'-monophosphate synthetase (356 aa).

5-amino-1-(5-phospho-beta-D-ribosyl)imidazole-4-carboxamide is bound by residues H27 and S94. The ATP-grasp domain occupies 101–333; it reads TENFAELTVP…YADLIQEDLS (233 aa). ATP is bound by residues 145–196 and E226; that span reads PRDI…TRYY. Position 255 (N255) interacts with 5-amino-1-(5-phospho-beta-D-ribosyl)imidazole-4-carboxamide. Mg(2+) contacts are provided by E293 and E306.

This sequence belongs to the phosphohexose mutase family. The cofactor is Mg(2+). Requires Mn(2+) as cofactor.

It carries out the reaction 5-amino-1-(5-phospho-beta-D-ribosyl)imidazole-4-carboxamide + formate + ATP = 5-formamido-1-(5-phospho-D-ribosyl)imidazole-4-carboxamide + ADP + phosphate. Its pathway is purine metabolism; IMP biosynthesis via de novo pathway; 5-formamido-1-(5-phospho-D-ribosyl)imidazole-4-carboxamide from 5-amino-1-(5-phospho-D-ribosyl)imidazole-4-carboxamide (formate route): step 1/1. Functionally, catalyzes the ATP- and formate-dependent formylation of 5-aminoimidazole-4-carboxamide-1-beta-d-ribofuranosyl 5'-monophosphate (AICAR) to 5-formaminoimidazole-4-carboxamide-1-beta-d-ribofuranosyl 5'-monophosphate (FAICAR) in the absence of folates. This chain is 5-formaminoimidazole-4-carboxamide-1-(beta)-D-ribofuranosyl 5'-monophosphate synthetase, found in Methanosarcina acetivorans (strain ATCC 35395 / DSM 2834 / JCM 12185 / C2A).